A 447-amino-acid polypeptide reads, in one-letter code: N-succinylarginine dihydrolase (447 aa).

Residues 21-30, Asn112, and 139-140 contribute to the substrate site; these read AGLAHGNVAS and HR. Residue Glu176 is part of the active site. Residue Arg215 coordinates substrate. His251 is an active-site residue. 2 residues coordinate substrate: Asp253 and Asn364. Residue Cys370 is the Nucleophile of the active site.

Belongs to the succinylarginine dihydrolase family. Homodimer.

The enzyme catalyses N(2)-succinyl-L-arginine + 2 H2O + 2 H(+) = N(2)-succinyl-L-ornithine + 2 NH4(+) + CO2. It functions in the pathway amino-acid degradation; L-arginine degradation via AST pathway; L-glutamate and succinate from L-arginine: step 2/5. Functionally, catalyzes the hydrolysis of N(2)-succinylarginine into N(2)-succinylornithine, ammonia and CO(2). The polypeptide is N-succinylarginine dihydrolase (Chromohalobacter salexigens (strain ATCC BAA-138 / DSM 3043 / CIP 106854 / NCIMB 13768 / 1H11)).